Here is a 278-residue protein sequence, read N- to C-terminus: Large ribosomal subunit protein uL2 (278 aa).

Basic residues-rich tracts occupy residues 210–219 (RKRWLGKRPQ) and 252–263 (KKSRGIKTRNSK). The interval 210 to 278 (RKRWLGKRPQ…LIIRHRKGNK (69 aa)) is disordered.

Belongs to the universal ribosomal protein uL2 family. Part of the 50S ribosomal subunit. Forms a bridge to the 30S subunit in the 70S ribosome.

One of the primary rRNA binding proteins. Required for association of the 30S and 50S subunits to form the 70S ribosome, for tRNA binding and peptide bond formation. It has been suggested to have peptidyltransferase activity; this is somewhat controversial. Makes several contacts with the 16S rRNA in the 70S ribosome. This chain is Large ribosomal subunit protein uL2, found in Lactobacillus gasseri (strain ATCC 33323 / DSM 20243 / BCRC 14619 / CIP 102991 / JCM 1131 / KCTC 3163 / NCIMB 11718 / NCTC 13722 / AM63).